Here is a 278-residue protein sequence, read N- to C-terminus: Transcriptional regulator ICP22 homolog (278 aa).

Disordered stretches follow at residues 1 to 42 (MFCT…RDTS) and 154 to 229 (CDVS…KRPQ). The interval 1-142 (MFCTSPATRG…PRGEDGFIEA (142 aa)) is IE62-binding. Acidic residues-rich tracts occupy residues 155–169 (DVSD…DDDG) and 183–205 (AESS…DSCE).

This sequence belongs to the herpesviridae ICP22 family. Interacts with IE62; this interaction modulates the function of IE62. Interacts with several components of host pre-initiation complex including GTF2E1, GTF2H2 and POLR2A; these interactions lead to repression of gene transcription. Interacts with host ASF1A; altering its ability to bind histones. Post-translationally, phosphorylated in vitro by host and by protein kinase ORF47.

It is found in the host cytoplasm. Its subcellular location is the host nucleus. The protein resides in the virion tegument. In terms of biological role, immediate early (EI) protein that functions as a transcriptional regulator of cellular and viral mRNAs mainly by interacting with several general transcription factors thereby disorganizing the preinitiation complex at certain promoters. May additionally help to regulate levels of histones in virus-infected cells by interacting with host ASF1. By inhibiting host transcriptional program, IE63 plays a major role in the ability of VZV to overcome the innate immune response to the virus. This chain is Transcriptional regulator ICP22 homolog, found in Varicella-zoster virus (strain Dumas) (HHV-3).